Reading from the N-terminus, the 572-residue chain is Urease subunit alpha (572 aa).

Positions 134 to 572 (AGIDSHIHLI…AAMNQRYFFG (439 aa)) constitute a Urease domain. 3 residues coordinate Ni(2+): His-139, His-141, and Lys-222. Residue Lys-222 is modified to N6-carboxylysine. His-224 contacts substrate. 2 residues coordinate Ni(2+): His-251 and His-277. Residue His-325 is the Proton donor of the active site. A Ni(2+)-binding site is contributed by Asp-365.

It belongs to the metallo-dependent hydrolases superfamily. Urease alpha subunit family. As to quaternary structure, heterotrimer of UreA (gamma), UreB (beta) and UreC (alpha) subunits. Three heterotrimers associate to form the active enzyme. Ni cation is required as a cofactor. In terms of processing, carboxylation allows a single lysine to coordinate two nickel ions.

It localises to the cytoplasm. It catalyses the reaction urea + 2 H2O + H(+) = hydrogencarbonate + 2 NH4(+). Its pathway is nitrogen metabolism; urea degradation; CO(2) and NH(3) from urea (urease route): step 1/1. The sequence is that of Urease subunit alpha from Yersinia enterocolitica serotype O:8 / biotype 1B (strain NCTC 13174 / 8081).